Consider the following 208-residue polypeptide: MRVNKIKIYGSDSIGLFGYIANDIAVLSEVISKEEEKIIKDTLGLEGIVKTTIAGTPTVGSFIIGKKDLIIVPSSIYEEELKKLEELFRVEVVDVVNNALGNNYYYWPKKNLLFAAEDTKKEAKLLAKKLNADLYLIDTDIEVGSSLIGNSKMLLHNPDIYIDIEDAKPVTLNMGDKFVGAAALLNDKGIVVGSKTTGIELIELQDLF.

The protein belongs to the eIF-6 family.

Its function is as follows. Binds to the 50S ribosomal subunit and prevents its association with the 30S ribosomal subunit to form the 70S initiation complex. The protein is Translation initiation factor 6 (eif6) of Nanoarchaeum equitans (strain Kin4-M).